A 159-amino-acid polypeptide reads, in one-letter code: Ribosomal RNA large subunit methyltransferase H (159 aa).

Residues Leu-76, Gly-108, and 127 to 132 (FSKMTF) each bind S-adenosyl-L-methionine.

The protein belongs to the RNA methyltransferase RlmH family. As to quaternary structure, homodimer.

It localises to the cytoplasm. The catalysed reaction is pseudouridine(1915) in 23S rRNA + S-adenosyl-L-methionine = N(3)-methylpseudouridine(1915) in 23S rRNA + S-adenosyl-L-homocysteine + H(+). Functionally, specifically methylates the pseudouridine at position 1915 (m3Psi1915) in 23S rRNA. This is Ribosomal RNA large subunit methyltransferase H from Exiguobacterium sibiricum (strain DSM 17290 / CCUG 55495 / CIP 109462 / JCM 13490 / 255-15).